We begin with the raw amino-acid sequence, 377 residues long: Nitric oxide reductase FlRd-NAD(+) reductase (377 aa).

It belongs to the FAD-dependent oxidoreductase family. FAD is required as a cofactor.

It is found in the cytoplasm. It catalyses the reaction 2 reduced [nitric oxide reductase rubredoxin domain] + NAD(+) + H(+) = 2 oxidized [nitric oxide reductase rubredoxin domain] + NADH. Its pathway is nitrogen metabolism; nitric oxide reduction. Functionally, one of at least two accessory proteins for anaerobic nitric oxide (NO) reductase. Reduces the rubredoxin moiety of NO reductase. In Escherichia coli O139:H28 (strain E24377A / ETEC), this protein is Nitric oxide reductase FlRd-NAD(+) reductase.